Consider the following 1480-residue polypeptide: Cystic fibrosis transmembrane conductance regulator (1480 aa).

Over 1 to 77 (MQRSPLEKAS…KLINALRRCF (77 aa)) the chain is Cytoplasmic. Residues 78 to 98 (FWRFMFYGIFLYLGEVTKAVQ) traverse the membrane as a helical segment. One can recognise an ABC transmembrane type-1 1 domain in the interval 81 to 365 (FMFYGIFLYL…WAVQTWYDSL (285 aa)). Over 99–122 (PLLLGRIIASYDPDNKEERSIAIY) the chain is Extracellular. The helical transmembrane segment at 123-146 (LGIGLCLLFIVRTLLLHPAIFGLH) threads the bilayer. Residues 147 to 195 (HIGMQMRIAMFSLIYKKTLKLSSRVLDKISIGQLVSLLSNNLNKFDEGL) lie on the Cytoplasmic side of the membrane. Residues 196–216 (ALAHFVWIAPLQVALLMGLIW) traverse the membrane as a helical segment. At 217-222 (ELLQAS) the chain is on the extracellular side. A helical membrane pass occupies residues 223 to 243 (AFCGLGFLIVLALFQAGLGRM). At 244 to 298 (MMKYRDQRAGKISERLVITSEMIENIQSVKAYCWEEAMEKMIENLRQTELKLTRK) the chain is on the cytoplasmic side. Residues 299–319 (AAYVRYFNSSAFFFSGFFVVF) traverse the membrane as a helical segment. Residues 320 to 339 (LSVLPYALIKGIILRKIFTT) lie on the Extracellular side of the membrane. Residues 340 to 358 (ISFCIVLRMAVTRQFPWAV) form a helical membrane-spanning segment. At 359–858 (QTWYDSLGAI…YLRYITVHKS (500 aa)) the chain is on the cytoplasmic side. ATP-binding positions include tryptophan 401, serine 434, 458–465 (GSTGAGKT), and glutamine 493. Positions 423 to 646 (NGDDSLFFSN…QPDFSSKLMG (224 aa)) constitute an ABC transporter 1 domain. A lipid anchor (S-palmitoyl cysteine) is attached at cysteine 524. Position 549 is a phosphoserine (serine 549). Positions 654–831 (SAERRNSILT…EEINEEDLKE (178 aa)) are disordered R region. A phosphoserine; by PKA mark is found at serine 660 and serine 670. Position 686 is a phosphoserine; by PKC (serine 686). Lysine 688 participates in a covalent cross-link: Glycyl lysine isopeptide (Lys-Gly) (interchain with G-Cter in ubiquitin). A phosphoserine; by PKA mark is found at serine 700 and serine 712. A Phosphothreonine modification is found at threonine 717. Phosphoserine; by PKA occurs at positions 737, 753, and 768. A Phosphoserine; by PKC modification is found at serine 790. Phosphoserine; by PKA is present on residues serine 795 and serine 813. A helical transmembrane segment spans residues 859–879 (LIFVLIWCLVIFLAEVAASLV). Residues 859–1155 (LIFVLIWCLV…AVNSSIDVDS (297 aa)) enclose the ABC transmembrane type-1 2 domain. Topologically, residues 880 to 918 (VLWLLGNTPLQDKGNSTHSRNNSYAVIITSTSSYYVFYI) are extracellular. N-linked (GlcNAc...) asparagine glycosylation is found at asparagine 894 and asparagine 900. The discontinuously helical transmembrane segment at 919 to 939 (YVGVADTLLAMGFFRGLPLVH) threads the bilayer. The Cytoplasmic segment spans residues 940–990 (TLITVSKILHHKMLHSVLQAPMSTLNTLKAGGILNRFSKDIAILDDLLPLT). A helical transmembrane segment spans residues 991–1011 (IFDFIQLLLIVIGAIAVVAVL). Topologically, residues 1012–1013 (QP) are extracellular. A helical membrane pass occupies residues 1014–1034 (YIFVATVPVIVAFIMLRAYFL). At 1035–1095 (QTSQQLKQLE…TANWFLYLST (61 aa)) the chain is on the cytoplasmic side. A helical membrane pass occupies residues 1096–1116 (LRWFQMRIEMIFVIFFIAVTF). At 1117-1130 (ISILTTGEGEGRVG) the chain is on the extracellular side. Residues 1131–1151 (IILTLAMNIMSTLQWAVNSSI) traverse the membrane as a helical segment. Residues 1152 to 1480 (DVDSLMRSVS…TEEEVQDTRL (329 aa)) are Cytoplasmic-facing. One can recognise an ABC transporter 2 domain in the interval 1210 to 1443 (MTVKDLTAKY…RSLFRQAISP (234 aa)). Residues tyrosine 1219 and 1244 to 1251 (GRTGSGKS) contribute to the ATP site. The tract at residues 1386 to 1480 (RTLKQAFADC…TEEEVQDTRL (95 aa)) is interaction with GORASP2. Cysteine 1395 is lipidated: S-palmitoyl cysteine. Phosphoserine is present on residues serine 1444 and serine 1456. Positions 1452–1480 (HRNSSKCKSKPQIAALKEETEEEVQDTRL) are disordered. A compositionally biased stretch (acidic residues) spans 1470–1480 (ETEEEVQDTRL). Residues 1478–1480 (TRL) carry the PDZ-binding motif.

It belongs to the ABC transporter superfamily. ABCC family. CFTR transporter (TC 3.A.1.202) subfamily. In terms of assembly, monomer; does not require oligomerization for channel activity. May form oligomers in the membrane. Interacts with SLC26A3, SLC26A6 and SHANK2. Interacts with NHERF1 and MYO6. Interacts (via C-terminus) with GOPC (via PDZ domain); this promotes CFTR internalization and thereby decreases channel activity. Interacts with SLC4A7 through NHERF1. Found in a complex with MYO5B and RAB11A. Interacts with ANO1. Interacts with SLC26A8. Interacts with AHCYL1; the interaction increases CFTR activity. Interacts with CSE1L. The core-glycosylated form interacts with GORASP2 (via PDZ GRASP-type 1 domain) in respone to ER stress. Interacts with MARCHF2; the interaction leads to CFTR ubiqtuitination and degradation. Interacts with ADGRG2. Post-translationally, N-glycosylated. Phosphorylated; cAMP treatment promotes phosphorylation and activates the channel. Dephosphorylation decreases the ATPase activity (in vitro). Phosphorylation at PKA sites activates the channel. Phosphorylation at PKC sites enhances the response to phosphorylation by PKA. Phosphorylated by AMPK; this inhibits channel activity. In terms of processing, ubiquitinated, leading to its degradation in the lysosome. Deubiquitination by USP10 in early endosomes enhances its endocytic recycling to the cell membrane. Ubiquitinated by RNF185 during ER stress. Ubiquitinated by MARCHF2. As to expression, expressed in the respiratory airway, including bronchial epithelium, and in the female reproductive tract, including oviduct (at protein level). Detected in pancreatic intercalated ducts in the exocrine tissue, on epithelial cells in intralobular striated ducts in sublingual salivary glands, on apical membranes of crypt cells throughout the small and large intestine, and on the reabsorptive duct in eccrine sweat glands. Detected on the equatorial segment of the sperm head (at protein level). Detected in nasal and bronchial superficial epithelium. Expressed by the central cells on the sebaceous glands, dermal adipocytes and, at lower levels, by epithelial cells.

The protein resides in the apical cell membrane. It is found in the early endosome membrane. The protein localises to the cell membrane. It localises to the recycling endosome membrane. Its subcellular location is the endoplasmic reticulum membrane. The protein resides in the nucleus. The enzyme catalyses ATP + H2O + closed Cl(-) channel = ADP + phosphate + open Cl(-) channel.. The catalysed reaction is chloride(in) = chloride(out). It carries out the reaction hydrogencarbonate(in) = hydrogencarbonate(out). It catalyses the reaction ATP + H2O = ADP + phosphate + H(+). Functionally, epithelial ion channel that plays an important role in the regulation of epithelial ion and water transport and fluid homeostasis. Mediates the transport of chloride ions across the cell membrane. Possesses an intrinsic ATPase activity and utilizes ATP to gate its channel; the passive flow of anions through the channel is gated by cycles of ATP binding and hydrolysis by the ATP-binding domains. The ion channel is also permeable to HCO(3)(-); selectivity depends on the extracellular chloride concentration. In vitro, mediates ATP-dependent glutathione flux. Exerts its function also by modulating the activity of other ion channels and transporters. Plays an important role in airway fluid homeostasis. Contributes to the regulation of the pH and the ion content of the airway surface fluid layer and thereby plays an important role in defense against pathogens. Modulates the activity of the epithelial sodium channel (ENaC) complex, in part by regulating the cell surface expression of the ENaC complex. Inhibits the activity of the ENaC channel containing subunits SCNN1A, SCNN1B and SCNN1G. Inhibits the activity of the ENaC channel containing subunits SCNN1D, SCNN1B and SCNN1G, but not of the ENaC channel containing subunits SCNN1A, SCNN1B and SCNN1G. May regulate bicarbonate secretion and salvage in epithelial cells by regulating the transporter SLC4A7. Can inhibit the chloride channel activity of ANO1. Plays a role in the chloride and bicarbonate homeostasis during sperm epididymal maturation and capacitation. The sequence is that of Cystic fibrosis transmembrane conductance regulator from Homo sapiens (Human).